The sequence spans 772 residues: Major capsid protein (772 aa).

Residues 593–772 (GIAPGRSNAG…AAQADRAEGQ (180 aa)) form a disordered region. Residues 654–664 (NRGGEAGGVTG) are compositionally biased toward gly residues. Pro residues predominate over residues 716-742 (PLPPAPGAAPPPPPGPPNGPPAGPPPS). A compositionally biased stretch (low complexity) spans 743 to 766 (DDGSSNPAAPVPTAIHAPPAAAQA).

It belongs to the totivirus major capsid protein family.

The protein localises to the virion. In terms of biological role, capsid protein self-assembles to form an icosahedral capsid with a T=2 symmetry, 40 nm in diameter, and consisting of 60 capsid proteins asymmetric dimers. The capsid encapsulates the genomic dsRNA and the polymerase and remains intact following cell entry to protect the dsRNA from degradation and to prevent unfavorable antiviral responses in the host cell during all the replication cycle of the virus. Nascent transcripts are transcribed within the structural confines of the virion and are extruded into the cytoplasm. Its function is as follows. Binds and removes 5' cap structures from cellular mRNA. The polypeptide is Major capsid protein (Helminthosporium victoriae virus-190S (Hv190SV)).